The primary structure comprises 590 residues: Leucine-rich repeat transmembrane neuronal protein 4 (590 aa).

Residues 1-30 form the signal peptide; it reads MGFRLITQLKGMSVFLVLFPTLLLVMLTGA. One can recognise an LRRNT domain in the interval 31-61; sequence QRACPKNCRCDGKIVYCESHAFADIPENISG. At 31–424 the chain is on the extracellular side; the sequence is QRACPKNCRC…HEYEHVSFHK (394 aa). N-linked (GlcNAc...) asparagine glycosylation occurs at Asn58. LRR repeat units follow at residues 62 to 83, 86 to 107, 110 to 131, 134 to 155, 158 to 179, 182 to 203, 206 to 226, 230 to 251, 254 to 275, and 278 to 299; these read GSQGLSLRFNSIQKLKSNQFAG, QLIWLYLDHNYISSVDEDAFQG, RLKELILSSNKITYLHNKTFHP, NLRNLDLSYNKLQTLQSEQFKG, KLIILHLRSNSLKTVPIRVFQD, NLDFLDLGYNRLRSLSRNAFAG, KLKELHLEHNQFSKINFAHFP, NLRSIYLQWNRIRSVSQGLTWT, SLHTLDLSGNDIQAIEPGTFKC, and NLQKLNLDSNKLTNVSQETVNA. Asn126 is a glycosylation site (N-linked (GlcNAc...) asparagine). The N-linked (GlcNAc...) asparagine glycan is linked to Asn291. The LRRCT domain maps to 311 to 362; the sequence is NMWECSRSICPLFYWLKNFKGNKESTMICAGPKHIQGEKVSDAVETYNICSD. The helical transmembrane segment at 425 to 445 threads the bilayer; it reads IIAGSVALFLSVAMILLVIYV. The Cytoplasmic portion of the chain corresponds to 446–590; it reads SWKRYPASMK…PAIYLERITN (145 aa).

The protein belongs to the LRRTM family. Peripherally associated with AMPAR complex. AMPAR complex consists of an inner core made of 4 pore-forming GluA/GRIA proteins (GRIA1, GRIA2, GRIA3 and GRIA4) and 4 major auxiliary subunits arranged in a twofold symmetry. One of the two pairs of distinct binding sites is occupied either by CNIH2, CNIH3 or CACNG2, CACNG3. The other harbors CACNG2, CACNG3, CACNG4, CACNG8 or GSG1L. This inner core of AMPAR complex is complemented by outer core constituents binding directly to the GluA/GRIA proteins at sites distinct from the interaction sites of the inner core constituents. Outer core constituents include at least PRRT1, PRRT2, CKAMP44/SHISA9, FRRS1L and NRN1. The proteins of the inner and outer core serve as a platform for other, more peripherally associated AMPAR constituents, including LRRTM4. Alone or in combination, these auxiliary subunits control the gating and pharmacology of the AMPAR complex and profoundly impact their biogenesis and protein processing. In terms of tissue distribution, predominantly in the brain (at protein level). Also expressed in the cerebellum and other tissues.

The protein resides in the cell membrane. It localises to the postsynaptic cell membrane. Functionally, may play a role in the development and maintenance of the vertebrate nervous system. Exhibits strong synaptogenic activity, restricted to excitatory presynaptic differentiation. The polypeptide is Leucine-rich repeat transmembrane neuronal protein 4 (Lrrtm4) (Mus musculus (Mouse)).